The chain runs to 490 residues: Bifunctional protein GlmU (490 aa).

The segment at 1–241 (MSSPGDTAVL…SALVAGVNNR (241 aa)) is pyrophosphorylase. Residues 12 to 15 (LAAG), lysine 26, glutamine 83, 88 to 89 (GT), 112 to 114 (SGD), glycine 151, glutamate 166, asparagine 181, and asparagine 239 each bind UDP-N-acetyl-alpha-D-glucosamine. Aspartate 114 serves as a coordination point for Mg(2+). Asparagine 239 is a binding site for Mg(2+). The segment at 242-262 (VQLAQLGAELNRRIVAAHQLA) is linker. The segment at 263–490 (GVTVVDPATT…AGGRPAGEAE (228 aa)) is N-acetyltransferase. UDP-N-acetyl-alpha-D-glucosamine-binding residues include arginine 344 and lysine 362. Histidine 374 serves as the catalytic Proton acceptor. UDP-N-acetyl-alpha-D-glucosamine-binding residues include tyrosine 377 and asparagine 388. Acetyl-CoA contacts are provided by residues alanine 391, 397 to 398 (NY), serine 416, and alanine 434. Residues 462–490 (RRKRPGSAAARAAEAAEKAAGGRPAGEAE) are disordered. Positions 467–490 (GSAAARAAEAAEKAAGGRPAGEAE) are enriched in low complexity.

It in the N-terminal section; belongs to the N-acetylglucosamine-1-phosphate uridyltransferase family. This sequence in the C-terminal section; belongs to the transferase hexapeptide repeat family. Homotrimer. The cofactor is Mg(2+).

The protein localises to the cytoplasm. The enzyme catalyses alpha-D-glucosamine 1-phosphate + acetyl-CoA = N-acetyl-alpha-D-glucosamine 1-phosphate + CoA + H(+). It carries out the reaction N-acetyl-alpha-D-glucosamine 1-phosphate + UTP + H(+) = UDP-N-acetyl-alpha-D-glucosamine + diphosphate. The protein operates within nucleotide-sugar biosynthesis; UDP-N-acetyl-alpha-D-glucosamine biosynthesis; N-acetyl-alpha-D-glucosamine 1-phosphate from alpha-D-glucosamine 6-phosphate (route II): step 2/2. It functions in the pathway nucleotide-sugar biosynthesis; UDP-N-acetyl-alpha-D-glucosamine biosynthesis; UDP-N-acetyl-alpha-D-glucosamine from N-acetyl-alpha-D-glucosamine 1-phosphate: step 1/1. Its pathway is bacterial outer membrane biogenesis; LPS lipid A biosynthesis. Functionally, catalyzes the last two sequential reactions in the de novo biosynthetic pathway for UDP-N-acetylglucosamine (UDP-GlcNAc). The C-terminal domain catalyzes the transfer of acetyl group from acetyl coenzyme A to glucosamine-1-phosphate (GlcN-1-P) to produce N-acetylglucosamine-1-phosphate (GlcNAc-1-P), which is converted into UDP-GlcNAc by the transfer of uridine 5-monophosphate (from uridine 5-triphosphate), a reaction catalyzed by the N-terminal domain. This Mycolicibacterium paratuberculosis (strain ATCC BAA-968 / K-10) (Mycobacterium paratuberculosis) protein is Bifunctional protein GlmU.